A 389-amino-acid polypeptide reads, in one-letter code: Succinate--CoA ligase [ADP-forming] subunit beta (389 aa).

Residues 9–244 (KQILRKYGIP…PSQMSNNEAR (236 aa)) form the ATP-grasp domain. ATP is bound by residues lysine 46, 53-55 (GRG), isoleucine 102, and glutamate 107. Mg(2+)-binding residues include asparagine 199 and aspartate 213. Substrate is bound by residues asparagine 264 and 321–323 (GIM).

This sequence belongs to the succinate/malate CoA ligase beta subunit family. Heterotetramer of two alpha and two beta subunits. Requires Mg(2+) as cofactor.

It catalyses the reaction succinate + ATP + CoA = succinyl-CoA + ADP + phosphate. The catalysed reaction is GTP + succinate + CoA = succinyl-CoA + GDP + phosphate. It participates in carbohydrate metabolism; tricarboxylic acid cycle; succinate from succinyl-CoA (ligase route): step 1/1. Its function is as follows. Succinyl-CoA synthetase functions in the citric acid cycle (TCA), coupling the hydrolysis of succinyl-CoA to the synthesis of either ATP or GTP and thus represents the only step of substrate-level phosphorylation in the TCA. The beta subunit provides nucleotide specificity of the enzyme and binds the substrate succinate, while the binding sites for coenzyme A and phosphate are found in the alpha subunit. In Protochlamydia amoebophila (strain UWE25), this protein is Succinate--CoA ligase [ADP-forming] subunit beta.